The chain runs to 813 residues: Leucine--tRNA ligase (813 aa).

Positions 42–52 match the 'HIGH' region motif; it reads PYTSGNLHIGH. Positions 580–584 match the 'KMSKS' region motif; that stretch reads KMSKS. Lysine 583 contributes to the ATP binding site.

Belongs to the class-I aminoacyl-tRNA synthetase family.

It is found in the cytoplasm. The enzyme catalyses tRNA(Leu) + L-leucine + ATP = L-leucyl-tRNA(Leu) + AMP + diphosphate. This chain is Leucine--tRNA ligase, found in Dehalococcoides mccartyi (strain ATCC BAA-2100 / JCM 16839 / KCTC 5957 / BAV1).